The sequence spans 269 residues: Ribonuclease HII (269 aa).

Residues 83–269 (YLIAGVDEVG…HRMSFLTNIL (187 aa)) form the RNase H type-2 domain. A divalent metal cation contacts are provided by Asp89, Glu90, and Asp185.

The protein belongs to the RNase HII family. Mn(2+) serves as cofactor. Requires Mg(2+) as cofactor.

The protein resides in the cytoplasm. It carries out the reaction Endonucleolytic cleavage to 5'-phosphomonoester.. Functionally, endonuclease that specifically degrades the RNA of RNA-DNA hybrids. In Clostridium botulinum (strain Langeland / NCTC 10281 / Type F), this protein is Ribonuclease HII.